We begin with the raw amino-acid sequence, 255 residues long: Triosephosphate isomerase (255 aa).

15-17 lines the substrate pocket; sequence NWK. H100 acts as the Electrophile in catalysis. E172 serves as the catalytic Proton acceptor. Substrate-binding positions include G178, S218, and 239–240; that span reads GG.

The protein belongs to the triosephosphate isomerase family. Homodimer.

It is found in the cytoplasm. It catalyses the reaction D-glyceraldehyde 3-phosphate = dihydroxyacetone phosphate. It participates in carbohydrate biosynthesis; gluconeogenesis. Its pathway is carbohydrate degradation; glycolysis; D-glyceraldehyde 3-phosphate from glycerone phosphate: step 1/1. Involved in the gluconeogenesis. Catalyzes stereospecifically the conversion of dihydroxyacetone phosphate (DHAP) to D-glyceraldehyde-3-phosphate (G3P). In Clostridium tetani (strain Massachusetts / E88), this protein is Triosephosphate isomerase.